Reading from the N-terminus, the 123-residue chain is Small ribosomal subunit protein uS12 (123 aa).

At Asp-89 the chain carries 3-methylthioaspartic acid.

This sequence belongs to the universal ribosomal protein uS12 family. Part of the 30S ribosomal subunit. Contacts proteins S8 and S17. May interact with IF1 in the 30S initiation complex.

Its function is as follows. With S4 and S5 plays an important role in translational accuracy. In terms of biological role, interacts with and stabilizes bases of the 16S rRNA that are involved in tRNA selection in the A site and with the mRNA backbone. Located at the interface of the 30S and 50S subunits, it traverses the body of the 30S subunit contacting proteins on the other side and probably holding the rRNA structure together. The combined cluster of proteins S8, S12 and S17 appears to hold together the shoulder and platform of the 30S subunit. This Maridesulfovibrio salexigens (strain ATCC 14822 / DSM 2638 / NCIMB 8403 / VKM B-1763) (Desulfovibrio salexigens) protein is Small ribosomal subunit protein uS12.